The following is a 726-amino-acid chain: Catalase-peroxidase (726 aa).

A disordered region spans residues 1–33; it reads MSTSDDIHNTTATGKCPFHQGGHDQSAGAGTTT. A cross-link (tryptophyl-tyrosyl-methioninium (Trp-Tyr) (with M-252)) is located at residues 105 to 226; the sequence is WHGAGTYRSI…LGATEMGLIY (122 aa). Histidine 106 functions as the Proton acceptor in the catalytic mechanism. The segment at residues 226-252 is a cross-link (tryptophyl-tyrosyl-methioninium (Tyr-Met) (with W-105)); that stretch reads YVNPEGPDHSGEPLSAAAAIRATFGNM. Histidine 267 is a binding site for heme b.

Belongs to the peroxidase family. Peroxidase/catalase subfamily. Homodimer or homotetramer. It depends on heme b as a cofactor. Post-translationally, formation of the three residue Trp-Tyr-Met cross-link is important for the catalase, but not the peroxidase activity of the enzyme.

It catalyses the reaction H2O2 + AH2 = A + 2 H2O. The catalysed reaction is 2 H2O2 = O2 + 2 H2O. In terms of biological role, bifunctional enzyme with both catalase and broad-spectrum peroxidase activity. The chain is Catalase-peroxidase from Shigella sonnei (strain Ss046).